Reading from the N-terminus, the 148-residue chain is Large ribosomal subunit protein bL9 (148 aa).

The protein belongs to the bacterial ribosomal protein bL9 family.

Functionally, binds to the 23S rRNA. The protein is Large ribosomal subunit protein bL9 of Pseudomonas fluorescens (strain Pf0-1).